The following is a 278-amino-acid chain: Ribosomal protein L11 methyltransferase (278 aa).

S-adenosyl-L-methionine-binding residues include threonine 131, glycine 152, aspartate 173, and asparagine 214.

This sequence belongs to the methyltransferase superfamily. PrmA family.

It is found in the cytoplasm. The enzyme catalyses L-lysyl-[protein] + 3 S-adenosyl-L-methionine = N(6),N(6),N(6)-trimethyl-L-lysyl-[protein] + 3 S-adenosyl-L-homocysteine + 3 H(+). Its function is as follows. Methylates ribosomal protein L11. This chain is Ribosomal protein L11 methyltransferase, found in Campylobacter lari (strain RM2100 / D67 / ATCC BAA-1060).